A 429-amino-acid chain; its full sequence is Adenylosuccinate synthetase (429 aa).

GTP-binding positions include 12-18 and 40-42; these read GDEGKGK and GHT. The active-site Proton acceptor is Asp13. Asp13 and Gly40 together coordinate Mg(2+). Residues 13–16, 38–41, Thr128, Arg142, Gln223, Thr238, and Arg302 contribute to the IMP site; these read DEGK and NAGH. His41 serves as the catalytic Proton donor. 298–304 is a binding site for substrate; that stretch reads VNTGRPR. GTP is bound by residues Arg304, 330 to 332, and 412 to 414; these read KLD and GVG.

This sequence belongs to the adenylosuccinate synthetase family. As to quaternary structure, homodimer. It depends on Mg(2+) as a cofactor.

Its subcellular location is the cytoplasm. It catalyses the reaction IMP + L-aspartate + GTP = N(6)-(1,2-dicarboxyethyl)-AMP + GDP + phosphate + 2 H(+). Its pathway is purine metabolism; AMP biosynthesis via de novo pathway; AMP from IMP: step 1/2. Its function is as follows. Plays an important role in the de novo pathway of purine nucleotide biosynthesis. Catalyzes the first committed step in the biosynthesis of AMP from IMP. The chain is Adenylosuccinate synthetase from Corynebacterium urealyticum (strain ATCC 43042 / DSM 7109).